The following is a 308-amino-acid chain: Coenzyme PQQ synthesis protein B (308 aa).

Belongs to the PqqB family.

Its pathway is cofactor biosynthesis; pyrroloquinoline quinone biosynthesis. Functionally, may be involved in the transport of PQQ or its precursor to the periplasm. This chain is Coenzyme PQQ synthesis protein B, found in Klebsiella pneumoniae subsp. pneumoniae (strain ATCC 700721 / MGH 78578).